The chain runs to 273 residues: Dermonecrotic toxin LruSicTox-alphaIC1b (273 aa).

Residue His-5 is part of the active site. Glu-25 and Asp-27 together coordinate Mg(2+). The active-site Nucleophile is the His-41. 2 disulfide bridges follow: Cys-45-Cys-51 and Cys-47-Cys-190. Asp-85 contributes to the Mg(2+) binding site.

It belongs to the arthropod phospholipase D family. Class II subfamily. Mg(2+) is required as a cofactor. Expressed by the venom gland.

Its subcellular location is the secreted. The catalysed reaction is an N-(acyl)-sphingosylphosphocholine = an N-(acyl)-sphingosyl-1,3-cyclic phosphate + choline. It carries out the reaction an N-(acyl)-sphingosylphosphoethanolamine = an N-(acyl)-sphingosyl-1,3-cyclic phosphate + ethanolamine. It catalyses the reaction a 1-acyl-sn-glycero-3-phosphocholine = a 1-acyl-sn-glycero-2,3-cyclic phosphate + choline. The enzyme catalyses a 1-acyl-sn-glycero-3-phosphoethanolamine = a 1-acyl-sn-glycero-2,3-cyclic phosphate + ethanolamine. In terms of biological role, dermonecrotic toxins cleave the phosphodiester linkage between the phosphate and headgroup of certain phospholipids (sphingolipid and lysolipid substrates), forming an alcohol (often choline) and a cyclic phosphate. This toxin acts on sphingomyelin (SM). It may also act on ceramide phosphoethanolamine (CPE), lysophosphatidylcholine (LPC) and lysophosphatidylethanolamine (LPE), but not on lysophosphatidylserine (LPS), and lysophosphatidylglycerol (LPG). It acts by transphosphatidylation, releasing exclusively cyclic phosphate products as second products. Induces dermonecrosis, hemolysis, increased vascular permeability, edema, inflammatory response, and platelet aggregation. The chain is Dermonecrotic toxin LruSicTox-alphaIC1b from Loxosceles rufescens (Mediterranean recluse spider).